The primary structure comprises 426 residues: Adenylosuccinate synthetase (426 aa).

GTP-binding positions include 12–18 (GDEGKGK) and 40–42 (GHT). Residue aspartate 13 is the Proton acceptor of the active site. Positions 13 and 40 each coordinate Mg(2+). IMP-binding positions include 13–16 (DEGK), 38–41 (NAGH), threonine 125, arginine 139, glutamine 221, threonine 236, and arginine 300. Catalysis depends on histidine 41, which acts as the Proton donor. 296–302 (TTTGRPR) contributes to the substrate binding site. GTP is bound by residues arginine 302, 328-330 (KLD), and 410-412 (AVG).

It belongs to the adenylosuccinate synthetase family. As to quaternary structure, homodimer. The cofactor is Mg(2+).

It is found in the cytoplasm. It catalyses the reaction IMP + L-aspartate + GTP = N(6)-(1,2-dicarboxyethyl)-AMP + GDP + phosphate + 2 H(+). The protein operates within purine metabolism; AMP biosynthesis via de novo pathway; AMP from IMP: step 1/2. In terms of biological role, plays an important role in the de novo pathway of purine nucleotide biosynthesis. Catalyzes the first committed step in the biosynthesis of AMP from IMP. The sequence is that of Adenylosuccinate synthetase from Syntrophomonas wolfei subsp. wolfei (strain DSM 2245B / Goettingen).